The following is a 650-amino-acid chain: Threonine--tRNA ligase (650 aa).

One can recognise a TGS domain in the interval 3–65 (DLVKVTLPDG…DRDARLEIVT (63 aa)). The catalytic stretch occupies residues 248-548 (DHRRLGPQLG…LTEHYAGAFP (301 aa)). The Zn(2+) site is built by Cys349, His400, and His525.

This sequence belongs to the class-II aminoacyl-tRNA synthetase family. In terms of assembly, homodimer. The cofactor is Zn(2+).

The protein resides in the cytoplasm. The enzyme catalyses tRNA(Thr) + L-threonine + ATP = L-threonyl-tRNA(Thr) + AMP + diphosphate + H(+). Catalyzes the attachment of threonine to tRNA(Thr) in a two-step reaction: L-threonine is first activated by ATP to form Thr-AMP and then transferred to the acceptor end of tRNA(Thr). Also edits incorrectly charged L-seryl-tRNA(Thr). The chain is Threonine--tRNA ligase from Anaeromyxobacter dehalogenans (strain 2CP-C).